The chain runs to 93 residues: MLCSIYKSSRKEGTYLYIPKKDDFSQVPDTLMQMFGKPMPVMTIKLDGRTLAQVDVEKVKASLINDGFFLQVPPPPENLLEKYKEQKAQQKGE.

The YcgL domain maps to 1–84 (MLCSIYKSSR…PPENLLEKYK (84 aa)).

In Vibrio campbellii (strain ATCC BAA-1116), this protein is YcgL domain-containing protein VIBHAR_01387.